The primary structure comprises 123 residues: Small ribosomal subunit protein uS12 (123 aa).

The segment at Met1–Pro28 is disordered. The segment covering Arg9–Ser21 has biased composition (basic residues). Asp89 carries the 3-methylthioaspartic acid modification.

The protein belongs to the universal ribosomal protein uS12 family. Part of the 30S ribosomal subunit. Contacts proteins S8 and S17. May interact with IF1 in the 30S initiation complex.

Functionally, with S4 and S5 plays an important role in translational accuracy. Its function is as follows. Interacts with and stabilizes bases of the 16S rRNA that are involved in tRNA selection in the A site and with the mRNA backbone. Located at the interface of the 30S and 50S subunits, it traverses the body of the 30S subunit contacting proteins on the other side and probably holding the rRNA structure together. The combined cluster of proteins S8, S12 and S17 appears to hold together the shoulder and platform of the 30S subunit. This Ruegeria pomeroyi (strain ATCC 700808 / DSM 15171 / DSS-3) (Silicibacter pomeroyi) protein is Small ribosomal subunit protein uS12.